Consider the following 761-residue polypeptide: Subtilisin-like protease SBT3 (761 aa).

The first 22 residues, M1–A22, serve as a signal peptide directing secretion. The propeptide occupies Q23 to H112. Residues T26 to E110 form the Inhibitor I9 domain. The Peptidase S8 domain maps to T116–L606. Catalysis depends on D144, which acts as the Charge relay system. C170 and C181 are disulfide-bonded. N177 and N203 each carry an N-linked (GlcNAc...) (complex) asparagine; alternate glycan. N-linked (GlcNAc...) (paucimannose) asparagine; alternate glycans are attached at residues N177 and N203. H215 acts as the Charge relay system in catalysis. A glycan (N-linked (GlcNAc...) (paucimannose) asparagine; partial) is linked at N376. A disulfide bridge connects residues C382 and C401. S538 serves as the catalytic Charge relay system. Residues L574–G598 are disordered. Basic and acidic residues predominate over residues D575–N586. C624 and C645 are oxidised to a cystine. N697 and N745 each carry an N-linked (GlcNAc...) (complex) asparagine; alternate glycan. N-linked (GlcNAc...) (paucimannose) asparagine; alternate glycans are attached at residues N697 and N745. The interval P756–W761 is necessary for prodomain cleavage and secretion.

This sequence belongs to the peptidase S8 family. In terms of assembly, homodimer. Propeptide is internally cleaved at Asn-38 and Asp-52 in a pH-dependent manner leading to the dissociation of the propeptide from the catalytic domain and resulting in the release of the active subtilase. Cleavage occurs at pH 5.7 and to a stronger extent at pH 5.2. In terms of tissue distribution, expressed in flowers, cotyledons and leaves with the highest expression in roots.

The protein resides in the secreted. With respect to regulation, inhibited by 1 mM 4-(2-aminoethyl)-benzenesulfonyl fluoride (AEBSF), a general inhibitor of serine proteinases, but not by the more selective serine protease inhibitors N-alpha-tosyl-L-lysinyl-chloromethylketone (TLCK), N-tosyl-L-phenylalaninyl-chloromethylketone (TPCK), leupeptin, aprotinin or benzamidine. Its proteolytic activity is autoinhibited by the non-covalent binding of the propeptide to the catalytic domain. No effect on activity by the addition of CaCl(2) or calcium chelators. Functionally, serine protease. Has preference for Gln in the P1 position and Lys in the P2 position of oligopeptide substrates. Active also with His in the P1 position. Involved in resistance against insects partly by regulating expression of systemic wound response genes and possibly by its post-ingestive activity in the insect gut. Apart from the role in defense, may be involved in regulation of pectin methylesterases (PMEs) activity and pectin methylesterification of the cell wall. The polypeptide is Subtilisin-like protease SBT3 (Solanum lycopersicum (Tomato)).